Reading from the N-terminus, the 319-residue chain is Ornithine carbamoyltransferase (319 aa).

Carbamoyl phosphate contacts are provided by residues 55–58, Gln82, Arg106, and 133–136; these read STRT and HPCQ. L-ornithine is bound by residues Asn171, Asp234, and 238 to 239; that span reads SM. Residues 274–275 and Arg302 contribute to the carbamoyl phosphate site; that span reads CL.

This sequence belongs to the aspartate/ornithine carbamoyltransferase superfamily. OTCase family.

It localises to the cytoplasm. It catalyses the reaction carbamoyl phosphate + L-ornithine = L-citrulline + phosphate + H(+). Its pathway is amino-acid biosynthesis; L-arginine biosynthesis; L-arginine from L-ornithine and carbamoyl phosphate: step 1/3. In terms of biological role, reversibly catalyzes the transfer of the carbamoyl group from carbamoyl phosphate (CP) to the N(epsilon) atom of ornithine (ORN) to produce L-citrulline. This is Ornithine carbamoyltransferase (argF) from Corynebacterium glutamicum (strain ATCC 13032 / DSM 20300 / JCM 1318 / BCRC 11384 / CCUG 27702 / LMG 3730 / NBRC 12168 / NCIMB 10025 / NRRL B-2784 / 534).